The primary structure comprises 244 residues: Phosphonates import ATP-binding protein PhnC (244 aa).

An ABC transporter domain is found at 6–244 (IECHNLETAY…LQAQFVVNSQ (239 aa)). 41–48 (GLNGAGKS) is a binding site for ATP.

Belongs to the ABC transporter superfamily. Phosphonates importer (TC 3.A.1.9.1) family. The complex is composed of two ATP-binding proteins (PhnC), two transmembrane proteins (PhnE) and a solute-binding protein (PhnD).

It is found in the cell inner membrane. The catalysed reaction is phosphonate(out) + ATP + H2O = phosphonate(in) + ADP + phosphate + H(+). In terms of biological role, part of the ABC transporter complex PhnCDE involved in phosphonates import. Responsible for energy coupling to the transport system. This Trichormus variabilis (strain ATCC 29413 / PCC 7937) (Anabaena variabilis) protein is Phosphonates import ATP-binding protein PhnC.